A 177-amino-acid chain; its full sequence is Large ribosomal subunit protein bL17 (177 aa).

Residues 136–177 form a disordered region; sequence AEEEAPAVEAEATEAVEAPVEETAAAEAEAPAEEAADAEKAE. Residues 138–149 show a composition bias toward acidic residues; sequence EEAPAVEAEATE. Residues 150–164 show a composition bias toward low complexity; it reads AVEAPVEETAAAEAE.

The protein belongs to the bacterial ribosomal protein bL17 family. Part of the 50S ribosomal subunit. Contacts protein L32.

The protein is Large ribosomal subunit protein bL17 of Bifidobacterium longum (strain NCC 2705).